Consider the following 335-residue polypeptide: MATKVVLDFEKPLFELEEKLNEMRVCLKQSSGEHNLSETESLSREIEVLESKVDALRHAIYKNLTRWQKVQLARHPERPFTLDYIYMMMQDFVELSGDRHYGDDKALIGGFARIEDEERDFSQTVMVIGHQKGRDTKSNLYRNFGMSQPEGYRKALRLMKLAEKFNKPVVTLIDTPGAYPGIKAEELGQAEAIARNLFEMAGLRVPVICVIIGEGASGGAIGIGVGNRILMAENAWYSVISPESCSSILWRSWKFKEQAAEALKLTAEDLLEQKIVDRIIPEPLGGAHHDPEKMADTVKSLLVEELRMLLEKNPDDLVNERIEKFAAMGVWNEEE.

Residues 48–308 form the CoA carboxyltransferase C-terminal domain; that stretch reads VLESKVDALR…KSLLVEELRM (261 aa).

This sequence belongs to the AccA family. As to quaternary structure, acetyl-CoA carboxylase is a heterohexamer composed of biotin carboxyl carrier protein (AccB), biotin carboxylase (AccC) and two subunits each of ACCase subunit alpha (AccA) and ACCase subunit beta (AccD).

Its subcellular location is the cytoplasm. It carries out the reaction N(6)-carboxybiotinyl-L-lysyl-[protein] + acetyl-CoA = N(6)-biotinyl-L-lysyl-[protein] + malonyl-CoA. It participates in lipid metabolism; malonyl-CoA biosynthesis; malonyl-CoA from acetyl-CoA: step 1/1. Functionally, component of the acetyl coenzyme A carboxylase (ACC) complex. First, biotin carboxylase catalyzes the carboxylation of biotin on its carrier protein (BCCP) and then the CO(2) group is transferred by the carboxyltransferase to acetyl-CoA to form malonyl-CoA. The protein is Acetyl-coenzyme A carboxylase carboxyl transferase subunit alpha of Chlorobium phaeobacteroides (strain BS1).